The chain runs to 591 residues: Parathyroid hormone/parathyroid hormone-related peptide receptor (591 aa).

The first 26 residues, 1–26 (MGAARIAPSLALLLCCPVLSSAYALV), serve as a signal peptide directing secretion. Topologically, residues 27 to 188 (DADDVFTKEE…REREVFDRLG (162 aa)) are extracellular. 3 cysteine pairs are disulfide-bonded: Cys-48/Cys-117, Cys-108/Cys-148, and Cys-131/Cys-170. A disordered region spans residues 67 to 104 (KGWTPASTSGKPRKEKASGKFYPESKENKDVPTGSRRR). Positions 81 to 96 (EKASGKFYPESKENKD) are enriched in basic and acidic residues. Residues Asn-151, Asn-161, Asn-166, and Asn-176 are each glycosylated (N-linked (GlcNAc...) asparagine). Residues 189 to 212 (MIYTVGYSMSLASLTVAVLILAYF) traverse the membrane as a helical segment. Topologically, residues 213-219 (RRLHCTR) are cytoplasmic. The helical transmembrane segment at 220–239 (NYIHMHMFLSFMLRAASIFV) threads the bilayer. At 240–282 (KDAVLYSGFTLDEAERLTEEELHIIAQVPPPPAAAAVGYAGCR) the chain is on the extracellular side. The chain crosses the membrane as a helical span at residues 283–306 (VAVTFFLYFLATNYYWILVEGLYL). The Cytoplasmic segment spans residues 307–320 (HSLIFMAFFSEKKY). A helical membrane pass occupies residues 321–342 (LWGFTIFGWGLPAVFVAVWVGV). The Extracellular segment spans residues 343-361 (RATLANTGCWDLSSGHKKW). A helical transmembrane segment spans residues 362 to 382 (IIQVPILASVVLNFILFINII). Over 383–409 (RVLATKLRETNAGRCDTRQQYRKLLRS) the chain is Cytoplasmic. The chain crosses the membrane as a helical span at residues 410-428 (TLVLVPLFGVHYTVFMALP). The Extracellular portion of the chain corresponds to 429–440 (YTEVSGTLWQIQ). The chain crosses the membrane as a helical span at residues 441-463 (MHYEMLFNSFQGFFVAIIYCFCN). The Cytoplasmic segment spans residues 464–591 (GEVQAEIRKS…LLQEEWETVM (128 aa)). The Important for interaction with G proteins motif lies at 474–477 (WSRW). Positions 516–544 (LPLSPRLPPATTNGHSQLPGHAKPGAPAT) are disordered.

The protein belongs to the G-protein coupled receptor 2 family. Homodimer in the absence of bound ligand. Peptide hormone binding leads to dissociation of the homodimer. Post-translationally, N-glycosylated.

The protein localises to the cell membrane. G-protein-coupled receptor for parathyroid hormone (PTH) and for parathyroid hormone-related peptide (PTHLH). Ligand binding causes a conformation change that triggers signaling via guanine nucleotide-binding proteins (G proteins) and modulates the activity of downstream effectors, such as adenylate cyclase (cAMP). PTH1R is coupled to G(s) G alpha proteins and mediates activation of adenylate cyclase activity. PTHLH dissociates from PTH1R more rapidly than PTH; as consequence, the cAMP response induced by PTHLH decays faster than the response induced by PTH. In Rattus norvegicus (Rat), this protein is Parathyroid hormone/parathyroid hormone-related peptide receptor (Pth1r).